Here is a 744-residue protein sequence, read N- to C-terminus: Adenosylcobalamin-dependent ribonucleoside-triphosphate reductase (744 aa).

A disulfide bond links Cys-120 and Cys-424. The effector region-1 stretch occupies residues 148 to 159; it reads SMPFSFLFDQLM. Residues 169-318 form an effector region-2 region; sequence VNSNIKQIPK…ICNLIGKTVV (150 aa). Residues Cys-413 and Glu-415 contribute to the active site. Residues 570–631 are adenosylcobalamin-binding-1; sequence FHYAGYLIQR…SKNFASAGTV (62 aa). Positions 690-729 are adenosylcobalamin-binding-2; the sequence is LKQAPKEPINKKTYEERAALITDDVEEVFTKQNDDQKGLE.

Belongs to the class II ribonucleoside-triphosphate reductase family. Monomer. It depends on adenosylcob(III)alamin as a cofactor.

The catalysed reaction is a 2'-deoxyribonucleoside 5'-triphosphate + [thioredoxin]-disulfide + H2O = a ribonucleoside 5'-triphosphate + [thioredoxin]-dithiol. With respect to regulation, allosterically regulated by ATP and dNTP. The chain is Adenosylcobalamin-dependent ribonucleoside-triphosphate reductase (rtpR) from Lactobacillus acidophilus (strain ATCC 700396 / NCK56 / N2 / NCFM).